A 169-amino-acid polypeptide reads, in one-letter code: Myelin basic protein (169 aa).

An N-acetylalanine modification is found at Ala1. A disordered region spans residues 1–114; sequence AAQKRPSQRS…GRGLSLSRFS (114 aa). Residue Ser7 is modified to Phosphoserine; in C5 and C6. Ser10 is modified (phosphoserine). Phosphotyrosine is present on Tyr12. Residue Ser17 is modified to Phosphoserine. At Thr18 the chain carries Phosphothreonine. Arg23 is subject to Citrulline; in form C8b. Citrulline is present on Arg29. Thr33 is modified (phosphothreonine). Ser38 carries the phosphoserine modification. Citrulline; alternate is present on Arg41. At Arg41 the chain carries Omega-N-methylarginine; alternate. Residues 43-87 are induces experimental autoimmune encephalomyelitis (EAE) 1; that stretch reads FGSDRGAPKRGSGKDGHHAARTTHYGSLPQKAQGHRPQDENPVVH. Arg47 carries the citrulline; in form C8b modification. Arg47 carries the omega-N-methylarginine modification. Residue Ser54 is modified to Phosphoserine; in C4, C5 and C6. Position 63 is a citrulline (Arg63). Position 65 is a phosphothreonine (Thr65). Tyr67 carries the phosphotyrosine modification. Residue Thr94 is modified to Phosphothreonine. The residue at position 96 (Arg96) is a Citrulline; in form C2, C3, C8a and C8b. Thr97 carries the post-translational modification Phosphothreonine; by MAPK; in C3, C4, C5 and C6. At Gln102 the chain carries Deamidated glutamine; in form C5. Position 106 is a citrulline; alternate (Arg106). Arg106 is subject to Omega-N-methylarginine; alternate. A Symmetric dimethylarginine; alternate modification is found at Arg106. Residue Arg112 is modified to Citrulline. Position 114 is a phosphoserine (Ser114). The segment at 114 to 122 is induces experimental autoimmune encephalomyelitis (EAE) 2; the sequence is SWGAEGQKP. The residue at position 120 (Gln120) is a Deamidated glutamine; in form C3. An N6-acetyllysine modification is found at Lys121. Arg129 is subject to Citrulline. Positions 133-169 are disordered; that stretch reads YKSAHKGLKGHDAQGTLSKIFKLGGRDSRSGSPMARR. Residue Gln146 is modified to Deamidated glutamine; in form C2. Arg158 carries the citrulline modification. Ser160 bears the Phosphoserine; in C4 and C6 mark. Citrulline; in form C3 is present on Arg161. Phosphoserine; in form C3, C5 and C6 is present on Ser164. 2 positions are modified to citrulline: Arg168 and Arg169.

Belongs to the myelin basic protein family. As to quaternary structure, homodimer; self-associates in the presence of lysolipid. In terms of processing, at least 6 charge isomers; C1 (the most cationic and least modified form), C2, C3, C4, C5 and C6 (the least cationic form); are produced as a result of optional post-translational modifications, such as phosphorylation of serine or threonine residues, deamidation of glutamine or asparagine residues, citrullination and methylation of arginine residues. Post-translationally, phosphorylated by TAOK2, VRK2, MAPK11, MAPK12, MAPK14 and MINK1. Proteolytically cleaved in B cell lysosomes by cathepsin CTSG which degrades the major immunogenic MBP epitope and prevents the activation of MBP-specific autoreactive T cells. As to expression, found in both the central and the peripheral nervous system.

It localises to the myelin membrane. Its function is as follows. Is, with PLP, the most abundant protein component of the myelin membrane in the CNS. Has a role in both the formation and stabilization of this compact multilayer arrangement of bilayers. Each splice variant and charge isomer may have a specialized function in the assembly of an optimized, biochemically functional myelin membrane. The polypeptide is Myelin basic protein (MBP) (Bos taurus (Bovine)).